A 454-amino-acid polypeptide reads, in one-letter code: MNRGETLDSIPTDLILDILSRLPTKSIARFHCVSKLWSSMLASQDFTRLFVNRSSSNPRLLLGIVRGGEWSFYSSPQPKNPYEKSSLEVAADFHMKLSEIKQHQHHGTSYAFGLIYLRTVWMSKEGNYEVCVICKPSTGQYYAILPPQPSGIFGDLGFDPIGKQFKVLVLNILDNHYILTLGTENDKWRSIQSSLRYRPCGQSPICINGVLYYIAYDTQDSSNDVIGCFDVRFEKFKFFHVNHDMVKCFFELINYKDKLGGFPLELSMWVLEDLEKEEWSKYAYTLKPDNNVVKVNYNLSFVGVTTRGEIVLAKMYACKPFYVFYYNPENNTLLSVEIQGVGEDSEWFSNYQRVYVFVEHVKDLHQFDNTKTSINLPEQKRKPTSISISSKYDDHVRTTLISSRKNQQVTTVSRPQQDRRTTNKFSALCLLVMKNSQVSKPDCFSWSSATMLYL.

In terms of domain architecture, F-box spans 4–53 (GETLDSIPTDLILDILSRLPTKSIARFHCVSKLWSSMLASQDFTRLFVNR).

This is F-box protein At1g67130 from Arabidopsis thaliana (Mouse-ear cress).